The sequence spans 255 residues: Acetylglutamate kinase (255 aa).

Residues 40 to 41 (GG), R62, and N153 each bind substrate.

This sequence belongs to the acetylglutamate kinase family. ArgB subfamily.

It localises to the cytoplasm. It catalyses the reaction N-acetyl-L-glutamate + ATP = N-acetyl-L-glutamyl 5-phosphate + ADP. It functions in the pathway amino-acid biosynthesis; L-arginine biosynthesis; N(2)-acetyl-L-ornithine from L-glutamate: step 2/4. Functionally, catalyzes the ATP-dependent phosphorylation of N-acetyl-L-glutamate. This Bacillus cereus (strain AH187) protein is Acetylglutamate kinase.